The primary structure comprises 810 residues: Zinc finger CCCH domain-containing protein 11A (810 aa).

C3H1-type zinc fingers lie at residues Pro-2 to Ala-29, Ile-31 to Ile-57, and Lys-60 to Arg-86. Ser-108 bears the Phosphoserine mark. Residues Lys-114 and Lys-124 each participate in a glycyl lysine isopeptide (Lys-Gly) (interchain with G-Cter in SUMO2) cross-link. Position 132 is a phosphoserine (Ser-132). Disordered stretches follow at residues Met-139 to Val-194, Lys-223 to Arg-258, Gly-285 to Asn-351, and Glu-367 to Ile-432. Lys-140 is covalently cross-linked (Glycyl lysine isopeptide (Lys-Gly) (interchain with G-Cter in SUMO2)). Phosphoserine is present on residues Ser-149 and Ser-171. Residues Ala-160–Asp-175 are compositionally biased toward acidic residues. A Phosphoserine modification is found at Ser-290. Basic and acidic residues-rich tracts occupy residues Lys-309 to Pro-322 and Glu-367 to Asp-390. At Thr-321 the chain carries Phosphothreonine. Residues Glu-362 to Gln-423 adopt a coiled-coil conformation. At Ser-370 the chain carries Phosphoserine. A compositionally biased stretch (polar residues) spans Ser-391 to Arg-402. Basic and acidic residues predominate over residues Gln-417 to Ile-432. A Glycyl lysine isopeptide (Lys-Gly) (interchain with G-Cter in SUMO2) cross-link involves residue Lys-478. Residues Ala-482–Val-549 form a disordered region. The segment covering Gln-486–Gln-498 has biased composition (low complexity). Lys-619 is covalently cross-linked (Glycyl lysine isopeptide (Lys-Gly) (interchain with G-Cter in SUMO2)). The segment at Thr-715–Ser-768 is disordered. The segment covering Pro-729–Ser-748 has biased composition (low complexity). Residues Gln-749–Thr-762 are compositionally biased toward polar residues.

In terms of assembly, interacts with TREX complex components THOC2, DDX39 and POLDIP3; the interactions are ATP-dependent. Interacts with PABPN1; this interaction retains ZC3H11A in nuclear speckles. Interacts with KPNA3.

It localises to the nucleus. The protein resides in the nucleus speckle. In terms of biological role, through its association with TREX complex components, may participate in the export and post-transcriptional coordination of selected mRNA transcripts, including those required to maintain the metabolic processes in embryonic cells. Binds RNA. (Microbial infection) Plays a role in efficient growth of several nuclear-replicating viruses such as HIV-1, influenza virus or herpes simplex virus 1/HHV-1. Required for efficient viral mRNA export. May be required for proper polyadenylation of adenovirus type 5/HAdV-5 capsid mRNA. The protein is Zinc finger CCCH domain-containing protein 11A (ZC3H11A) of Homo sapiens (Human).